The following is a 235-amino-acid chain: MTSRSRQAAYSGIFINETTGEFPQKEQELFEGIVAVIAVVILTWMVFWMRKVSRNVKVQLEQAVDSALQRGNHHGWALVMMVFFAVAREGLESVFFLLAAFQQDVGIWPPLGAMLGLATAVVLGFLLYWGGIRLNLGAFFKWTSLFILFVAAGLAAGAIRAFHEAGLWNHFQEIAFDMSAVLSTHSLFGTLMEGIFGYQEAPSVSEVAVWFIYLIPALVAFALPPRAGATASRSA.

Topologically, residues 1-28 (MTSRSRQAAYSGIFINETTGEFPQKEQE) are periplasmic. Residues 29–49 (LFEGIVAVIAVVILTWMVFWM) form a helical membrane-spanning segment. The Cytoplasmic segment spans residues 50–77 (RKVSRNVKVQLEQAVDSALQRGNHHGWA). Residues 78-98 (LVMMVFFAVAREGLESVFFLL) traverse the membrane as a helical segment. Residues 99 to 106 (AAFQQDVG) are Periplasmic-facing. A helical membrane pass occupies residues 107-127 (IWPPLGAMLGLATAVVLGFLL). Residues 128-138 (YWGGIRLNLGA) lie on the Cytoplasmic side of the membrane. A helical membrane pass occupies residues 139-159 (FFKWTSLFILFVAAGLAAGAI). Topologically, residues 160–177 (RAFHEAGLWNHFQEIAFD) are periplasmic. Residues 178–198 (MSAVLSTHSLFGTLMEGIFGY) traverse the membrane as a helical segment. At 199 to 203 (QEAPS) the chain is on the cytoplasmic side. The chain crosses the membrane as a helical span at residues 204–224 (VSEVAVWFIYLIPALVAFALP). Over 225–235 (PRAGATASRSA) the chain is Periplasmic.

This sequence belongs to the oxidase-dependent Fe transporter (OFeT) (TC 9.A.10.1) family. As to quaternary structure, part of a ferrous iron transporter composed of EfeU, EfeO and EfeB.

The protein resides in the cell inner membrane. Functionally, uptake of Fe(2+) ions across the membrane. The polypeptide is Ferrous iron permease EfeU (efeU) (Shigella flexneri).